The chain runs to 831 residues: Cation/H(+) symporter 13 (831 aa).

The next 12 helical transmembrane spans lie at 50–70 (YALPLLLLQMSVIIVTSRLIF), 89–109 (VVLGPSFLGHNVIYMNMFLPA), 112–132 (KIIIQTLSNVGFVIHLFLLGL), 147–167 (ILIGTASYAFPFSLGNLTIMF), 214–234 (LATHCSMVCEVCSWFVALAFN), 250–270 (MIIGLLLVIYFVFRPIIVWLT), 282–302 (VVPFFPVLLLLSIASLSGEAM), 303–323 (GVHAAFGAFWLGVSLPDGPPL), 334–354 (FASNLFLPCFIAISGLQTNFF), 364–384 (VVMIEIILLITYGCKFLGTAA), 397–417 (LCLAFLMCCQGIIEVYTTIVW), and 430–450 (LVIITILFVTGISRFLVVYLY).

This sequence belongs to the monovalent cation:proton antiporter 2 (CPA2) transporter (TC 2.A.37) family. CHX (TC 2.A.37.4) subfamily. In terms of tissue distribution, preferentially expressed in pollen before and after germination. Detected in pollen grains within anthers of the flower buds or in pollen on fully open flowers and on the stigma, and in pollen tubes growing in the style. Weakly expressed in roots.

It localises to the cell membrane. High-affinity potassium transporter that plays a role in K(+) acquisition. May operate as a K(+)/H(+) symporter. In Arabidopsis thaliana (Mouse-ear cress), this protein is Cation/H(+) symporter 13 (CHX13).